Reading from the N-terminus, the 139-residue chain is uncharacterized protein (139 aa).

Residues 77 to 97 (YCFFFFLVLFLNGIIATRGKA) traverse the membrane as a helical segment.

It localises to the mitochondrion membrane. This is an uncharacterized protein from Arabidopsis thaliana (Mouse-ear cress).